We begin with the raw amino-acid sequence, 210 residues long: Fimbriae Z protein (210 aa).

Residues 5-121 (SVIIMDTHPI…DIFHAVQMIL (117 aa)) enclose the Response regulatory domain. Aspartate 56 is modified (4-aspartylphosphate). Positions 143–208 (NSSTVTVLSN…ELIDYAKLYE (66 aa)) constitute an HTH luxR-type domain. Residues 167–186 (NKEIADKLLLSNKTVSAHKS) constitute a DNA-binding region (H-T-H motif).

The protein resides in the cytoplasm. In Escherichia coli O157:H7, this protein is Fimbriae Z protein (fimZ).